We begin with the raw amino-acid sequence, 264 residues long: MYAQPKLTSAEYVQHHMSHWKLNLHNFTFTDGGFWTLNLDTLIISVVLGALFILIFYIVARRATASVPGKWQNAIEMAVEAVDGTVKDSFHGDRSLVAPLALTIFIWVFLMNFMDLVPVDLIPRLFQMGGVEHFKAVPTADPTLTFAMSITVFVLVIFYNFKMKGAIGLGKEVLSRPFGWYLMPINVIFRLIDEGVKPISLALRLFGNLFAGELIFILIALLPWWSQFTLGMVWTLFHLLVITVQAFIFMMLTVVYISLAAESH.

The next 5 helical transmembrane spans lie at 39–59 (LDTL…FYIV), 97–117 (VAPL…MDLV), 139–159 (TADP…VIFY), 205–225 (LFGN…LPWW), and 239–259 (LLVI…YISL).

The protein belongs to the ATPase A chain family. In terms of assembly, F-type ATPases have 2 components, CF(1) - the catalytic core - and CF(0) - the membrane proton channel. CF(1) has five subunits: alpha(3), beta(3), gamma(1), delta(1), epsilon(1). CF(0) has three main subunits: a(1), b(2) and c(9-12). The alpha and beta chains form an alternating ring which encloses part of the gamma chain. CF(1) is attached to CF(0) by a central stalk formed by the gamma and epsilon chains, while a peripheral stalk is formed by the delta and b chains.

It localises to the cell inner membrane. Its function is as follows. Key component of the proton channel; it plays a direct role in the translocation of protons across the membrane. The chain is ATP synthase subunit a from Coxiella burnetii (strain CbuK_Q154) (Coxiella burnetii (strain Q154)).